Consider the following 446-residue polypeptide: sn-2 acyl-lipid omega-3 desaturase (ferredoxin), chloroplastic (446 aa).

Residues 1–65 constitute a chloroplast transit peptide; sequence MANLVLSECG…DGFTRNWALN (65 aa). 2 helical membrane-spanning segments follow: residues 118 to 138 and 141 to 161; these read LSYV…AAYL and WIVW…LFVL. A Histidine box-1 motif is present at residues 163 to 167; sequence HDCGH. A Histidine box-2 motif is present at residues 199 to 203; sequence HRTHH. 3 helical membrane-spanning segments follow: residues 231–250, 279–299, and 302–322; these read RFFR…YLWA, TACW…IGPI, and LKLY…VTYL. The Histidine box-3 signature appears at 366-370; that stretch reads HVIHH.

It belongs to the fatty acid desaturase type 1 family. Most abundant in leaves and seedlings.

It localises to the plastid. The protein localises to the chloroplast inner membrane. It carries out the reaction a (7Z,10Z)-hexadecadienoyl-containing glycerolipid + 2 reduced [2Fe-2S]-[ferredoxin] + O2 + 2 H(+) = a (7Z,10Z,13Z)-hexadecatrienoyl-containing glycerolipid + 2 oxidized [2Fe-2S]-[ferredoxin] + 2 H2O. It catalyses the reaction a (9Z,12Z)-octadecadienoyl-containing glycerolipid + 2 reduced [2Fe-2S]-[ferredoxin] + O2 + 2 H(+) = (9Z,12Z,15Z)-octadecatrienoyl-containing glycerolipid + 2 oxidized [2Fe-2S]-[ferredoxin] + 2 H2O. It participates in lipid metabolism; polyunsaturated fatty acid biosynthesis. Chloroplast omega-3 fatty acid desaturase introduces the third double bond in the biosynthesis of 16:3 and 18:3 fatty acids, important constituents of plant membranes. It is thought to use ferredoxin as an electron donor and to act on fatty acids esterified to galactolipids, sulfolipids and phosphatidylglycerol. The chain is sn-2 acyl-lipid omega-3 desaturase (ferredoxin), chloroplastic from Arabidopsis thaliana (Mouse-ear cress).